Consider the following 790-residue polypeptide: MYKSLLFCLKIFVFLILVGCGITAYIIYHYSRDLPDYSQLARYYPPSVTRIYSRDGKLMEEYAFERRVFVPINSVPSSLIESFIAAEDKNFYNHPGVDLFGIVRAAFLNISNYLHHRRMEGASTITQQVVKNFLLTNEVSLERKIKEAILSYMISRVFTKDQILELYLNQTFFGRGAYGVAVAAQNYFNKSVEELTIAESAFIAALPKAPSELNPERNYARVKARRDYVITRMFEDGYITRDAAKEAMDSPIVLRKRAKEETVTADYYAAQVREEVIRMLNSKEVFYTGGLTIITSLDAKMQQLAENSLRKGLREFDRRCGFRKPIANISLDNWQGELKKLPTPPSLLEYKLAVVLDVADNHVEIGLIDGSKSKMPIAEMKWARSNFKSVKTLLKKGDVIVVEAIKEGYALRQIPEVNGAIMVMNPNTGQVLASVGGYDFSTSKFDRVTQALRQPGSLSKTFVYLAALENGVKPNQIFNDGPIEISQGPGMPSWRPKNYEGKFLGEITMRTGLEKSRNLITVRVATAVGLTKIVDIIKRFGINNEPKKVYSMVLGSIETTLSRMTNAYAIIANGGKKVEPHFVELIKDRNGKIIYRRDDRECLACNVSDSNLDTAILEIPKEYIYRVTDEASDYQITSFLTGAIDRGTGYAAKKLGKIIGGKTGTSNDSKDTWFVGFTPKIVVGSYVGYDTPKELGKRATGSNVVLPIFIDFMSNAYKDKPSLPFKVPDSIKLIAVDSATGKITPGGTVIEAFKVNNVQMLENEDMIDNQDNNDIFDYVPSKEDQSQEIY.

The Cytoplasmic segment spans residues 1-6 (MYKSLL). Residues 7–27 (FCLKIFVFLILVGCGITAYII) traverse the membrane as a helical; Signal-anchor for type II membrane protein segment. Topologically, residues 28-790 (YHYSRDLPDY…SKEDQSQEIY (763 aa)) are periplasmic. A transglycosylase region spans residues 49-220 (TRIYSRDGKL…SELNPERNYA (172 aa)). Glutamate 87 (proton donor; for transglycosylase activity) is an active-site residue. A transpeptidase region spans residues 398 to 711 (DVIVVEAIKE…SNVVLPIFID (314 aa)). Serine 457 serves as the catalytic Acyl-ester intermediate; for transpeptidase activity.

In the N-terminal section; belongs to the glycosyltransferase 51 family. This sequence in the C-terminal section; belongs to the transpeptidase family.

The protein resides in the cell inner membrane. It carries out the reaction [GlcNAc-(1-&gt;4)-Mur2Ac(oyl-L-Ala-gamma-D-Glu-L-Lys-D-Ala-D-Ala)](n)-di-trans,octa-cis-undecaprenyl diphosphate + beta-D-GlcNAc-(1-&gt;4)-Mur2Ac(oyl-L-Ala-gamma-D-Glu-L-Lys-D-Ala-D-Ala)-di-trans,octa-cis-undecaprenyl diphosphate = [GlcNAc-(1-&gt;4)-Mur2Ac(oyl-L-Ala-gamma-D-Glu-L-Lys-D-Ala-D-Ala)](n+1)-di-trans,octa-cis-undecaprenyl diphosphate + di-trans,octa-cis-undecaprenyl diphosphate + H(+). The enzyme catalyses Preferential cleavage: (Ac)2-L-Lys-D-Ala-|-D-Ala. Also transpeptidation of peptidyl-alanyl moieties that are N-acyl substituents of D-alanine.. The protein operates within cell wall biogenesis; peptidoglycan biosynthesis. Functionally, cell wall formation. Synthesis of cross-linked peptidoglycan from the lipid intermediates. The enzyme has a penicillin-insensitive transglycosylase N-terminal domain (formation of linear glycan strands) and a penicillin-sensitive transpeptidase C-terminal domain (cross-linking of the peptide subunits). This Rickettsia conorii (strain ATCC VR-613 / Malish 7) protein is Penicillin-binding protein 1A (mrcA).